Consider the following 487-residue polypeptide: NAD(+)--arginine ADP-ribosyltransferase EFV (487 aa).

A coiled-coil region spans residues 2–51; sequence SQLNKWQKELQALQKANYQETDNQLFNVYRQSLIDIKKRLKVYTENAESL. The 173-residue stretch at 315–487 folds into the TR mART core domain; the sequence is LDFFGQSDLQ…DNILEVTILG (173 aa). NAD(+) contacts are provided by residues 346–358 and 394–400; these read TSDAFAKMNKILR and RGVSANE. Active-site residues include Arg394, Ser415, and Glu463. Glu463 lines the NAD(+) pocket.

Its subcellular location is the secreted. The enzyme catalyses L-arginyl-[protein] + NAD(+) = N(omega)-(ADP-D-ribosyl)-L-arginyl-[protein] + nicotinamide + H(+). A probable mono(ADP-ribosyl)transferase, it may ADP-ribosylate Arg in target protein(s). Upon expression in yeast cells causes cell death. The sequence is that of NAD(+)--arginine ADP-ribosyltransferase EFV from Enterococcus faecalis (strain ATCC 700802 / V583).